A 298-amino-acid polypeptide reads, in one-letter code: UDP-N-acetylenolpyruvoylglucosamine reductase (298 aa).

The 165-residue stretch at 26–190 (RAGGPAERLY…VAAVLDLEPG (165 aa)) folds into the FAD-binding PCMH-type domain. Arg170 is a catalytic residue. Ser219 functions as the Proton donor in the catalytic mechanism. Residue Glu289 is part of the active site.

This sequence belongs to the MurB family. It depends on FAD as a cofactor.

The protein localises to the cytoplasm. It carries out the reaction UDP-N-acetyl-alpha-D-muramate + NADP(+) = UDP-N-acetyl-3-O-(1-carboxyvinyl)-alpha-D-glucosamine + NADPH + H(+). It functions in the pathway cell wall biogenesis; peptidoglycan biosynthesis. Functionally, cell wall formation. In Alkalilimnicola ehrlichii (strain ATCC BAA-1101 / DSM 17681 / MLHE-1), this protein is UDP-N-acetylenolpyruvoylglucosamine reductase.